We begin with the raw amino-acid sequence, 209 residues long: Probable phosphatidylglycerophosphate synthase (209 aa).

Transmembrane regions (helical) follow at residues 32-52 (ILTL…FYGG), 105-125 (ALIG…LILT), 147-167 (WGGK…VLPL), and 171-191 (LHVA…ITGV).

It belongs to the CDP-alcohol phosphatidyltransferase class-I family.

The protein resides in the cell membrane. It catalyses the reaction a CDP-1,2-diacyl-sn-glycerol + sn-glycerol 3-phosphate = a 1,2-diacyl-sn-glycero-3-phospho-(1'-sn-glycero-3'-phosphate) + CMP + H(+). Its pathway is lipid metabolism; phospholipid metabolism. Its function is as follows. Probably catalyzes the synthesis of phosphatidylglycerophosphate by transferring a phosphatidyl group from CDP-diacylglycerol to glycerol 3-phosphate. The polypeptide is Probable phosphatidylglycerophosphate synthase (Mycobacterium tuberculosis (strain CDC 1551 / Oshkosh)).